We begin with the raw amino-acid sequence, 64 residues long: Large ribosomal subunit protein bL28 (64 aa).

The segment at 1-21 (MAKKDQLTLRGPLYGNNRSHS) is disordered.

This sequence belongs to the bacterial ribosomal protein bL28 family.

In Mycoplasma genitalium (strain ATCC 33530 / DSM 19775 / NCTC 10195 / G37) (Mycoplasmoides genitalium), this protein is Large ribosomal subunit protein bL28.